The following is a 959-amino-acid chain: Ribonucleoside-diphosphate reductase large subunit (959 aa).

Substrate is bound by residues Thr68, 83–84 (SC), and Gly112. Cys84 and Cys626 are oxidised to a cystine. The Proton acceptor role is filled by Asn270. In terms of domain architecture, DOD-type homing endonuclease spans 378 to 508 (LPTLFGNSEH…IQLLLIGMGV (131 aa)). The active-site Cysteine radical intermediate is the Cys611. Glu613 serves as the catalytic Proton acceptor. 751–755 (PTATS) is a binding site for substrate.

The protein belongs to the ribonucleoside diphosphate reductase large chain family. As to quaternary structure, heterotetramer composed of a homodimer of the large subunit (R1) and a homodimer of the small subunit (R2). Larger multisubunit protein complex are also active, composed of (R1)n(R2)n.

The enzyme catalyses a 2'-deoxyribonucleoside 5'-diphosphate + [thioredoxin]-disulfide + H2O = a ribonucleoside 5'-diphosphate + [thioredoxin]-dithiol. With respect to regulation, under complex allosteric control mediated by deoxynucleoside triphosphates and ATP binding. The type of nucleotide bound at the specificity site determines substrate preference. It seems probable that ATP makes the enzyme reduce CDP and UDP, dGTP favors ADP reduction and dTTP favors GDP reduction. In terms of biological role, ribonucleoside-diphosphate reductase holoenzyme provides the precursors necessary for viral DNA synthesis. Allows virus growth in non-dividing cells. Catalyzes the biosynthesis of deoxyribonucleotides from the corresponding ribonucleotides. This chain is Ribonucleoside-diphosphate reductase large subunit, found in Acheta domesticus (House cricket).